Here is a 741-residue protein sequence, read N- to C-terminus: NAD(P)H-quinone oxidoreductase subunit 5, chloroplastic (741 aa).

Transmembrane regions (helical) follow at residues 9 to 29 (WIVP…SLFF), 40 to 60 (WALI…NLFL), 89 to 109 (IDPL…MVMI), 124 to 144 (FFAY…SPNL), 147 to 167 (IYIF…FWFT), 185 to 205 (GDFG…SFEF), 218 to 238 (IDGV…LGPV), 258 to 278 (TPIS…FLVA), 286 to 306 (ALPL…LLGA), 327 to 347 (LGYM…FHLI), 354 to 374 (ALLF…VGYC), 395 to 415 (GITF…ACFW), 427 to 447 (YSPI…FYMF), 550 to 570 (FPLV…VPFF), 601 to 621 (FFID…IACI), 651 to 671 (IIYN…IILI), 687 to 707 (WAID…GEGM), and 719 to 739 (IFFS…SFSF).

It belongs to the complex I subunit 5 family. As to quaternary structure, NDH is composed of at least 16 different subunits, 5 of which are encoded in the nucleus.

The protein resides in the plastid. It is found in the chloroplast thylakoid membrane. The enzyme catalyses a plastoquinone + NADH + (n+1) H(+)(in) = a plastoquinol + NAD(+) + n H(+)(out). It carries out the reaction a plastoquinone + NADPH + (n+1) H(+)(in) = a plastoquinol + NADP(+) + n H(+)(out). NDH shuttles electrons from NAD(P)H:plastoquinone, via FMN and iron-sulfur (Fe-S) centers, to quinones in the photosynthetic chain and possibly in a chloroplast respiratory chain. The immediate electron acceptor for the enzyme in this species is believed to be plastoquinone. Couples the redox reaction to proton translocation, and thus conserves the redox energy in a proton gradient. The polypeptide is NAD(P)H-quinone oxidoreductase subunit 5, chloroplastic (ndhF) (Cryptomeria japonica (Japanese cedar)).